A 206-amino-acid polypeptide reads, in one-letter code: Large ribosomal subunit protein uL4 (206 aa).

Residues 63 to 93 (MYKQKGTGRARHHSARAPQFRGGGKAHGPVV) form a disordered region. Over residues 64–77 (YKQKGTGRARHHSA) the composition is skewed to basic residues.

Belongs to the universal ribosomal protein uL4 family. As to quaternary structure, part of the 50S ribosomal subunit.

Functionally, one of the primary rRNA binding proteins, this protein initially binds near the 5'-end of the 23S rRNA. It is important during the early stages of 50S assembly. It makes multiple contacts with different domains of the 23S rRNA in the assembled 50S subunit and ribosome. Forms part of the polypeptide exit tunnel. The polypeptide is Large ribosomal subunit protein uL4 (Rhizobium meliloti (strain 1021) (Ensifer meliloti)).